Here is a 424-residue protein sequence, read N- to C-terminus: Adenylyltransferase and sulfurtransferase UBA4 (424 aa).

Residues Gly-76, Asp-97, 104-108 (TNLHR), Lys-121, and 165-166 (DS) each bind ATP. Zn(2+) is bound by residues Cys-206 and Cys-209. Catalysis depends on Cys-223, which acts as the Glycyl thioester intermediate; for adenylyltransferase activity. Cys-283 lines the Zn(2+) pocket. The region spanning 326-422 (RNSDHVLLDV…WYSEVDQNIP (97 aa)) is the Rhodanese domain. The Cysteine persulfide intermediate; for sulfurtransferase activity role is filled by Cys-382.

In the N-terminal section; belongs to the HesA/MoeB/ThiF family. UBA4 subfamily. Requires Zn(2+) as cofactor.

The protein localises to the cytoplasm. It localises to the cytosol. It functions in the pathway tRNA modification; 5-methoxycarbonylmethyl-2-thiouridine-tRNA biosynthesis. In terms of biological role, plays a central role in 2-thiolation of mcm(5)S(2)U at tRNA wobble positions of cytosolic tRNA(Lys), tRNA(Glu) and tRNA(Gln). Acts by mediating the C-terminal thiocarboxylation of sulfur carrier URM1. Its N-terminus first activates URM1 as acyl-adenylate (-COAMP), then the persulfide sulfur on the catalytic cysteine is transferred to URM1 to form thiocarboxylation (-COSH) of its C-terminus. The reaction probably involves hydrogen sulfide that is generated from the persulfide intermediate and that acts as a nucleophile towards URM1. Subsequently, a transient disulfide bond is formed. Does not use thiosulfate as sulfur donor; NFS1 probably acting as a sulfur donor for thiocarboxylation reactions. Prior mcm(5) tRNA modification by the elongator complex is required for 2-thiolation. May also be involved in protein urmylation. The sequence is that of Adenylyltransferase and sulfurtransferase UBA4 from Meyerozyma guilliermondii (strain ATCC 6260 / CBS 566 / DSM 6381 / JCM 1539 / NBRC 10279 / NRRL Y-324) (Yeast).